The sequence spans 735 residues: Protostadienol synthase A (735 aa).

The stretch at 129–170 (KNEMIRYLLNFVNEDGGWGLWINSPSTVFGTTMNYTMLRILG) is one PFTB 1 repeat. The active-site Proton donor is D460. 3 PFTB repeats span residues 487–528 (LAEA…YDNV), 564–604 (MARC…ETVG), and 613–660 (CRNA…ALMG).

It belongs to the terpene cyclase/mutase family.

It carries out the reaction (S)-2,3-epoxysqualene = (17Z)-protosta-17(20),24-dien-3beta-ol. Protostadienol synthase which cyclizes (3S)-oxidosqualene to (17Z)-protosta-17(20),24-dien-3-beta-ol (protostadienol), the biosynthetic precursor of helvolic acid, a secondary metabolite which promotes virulence. This Arthroderma gypseum (strain ATCC MYA-4604 / CBS 118893) (Microsporum gypseum) protein is Protostadienol synthase A (PDSA).